The following is a 465-amino-acid chain: ATP synthase subunit beta (465 aa).

152 to 159 (GGAGVGKT) provides a ligand contact to ATP.

Belongs to the ATPase alpha/beta chains family. As to quaternary structure, F-type ATPases have 2 components, CF(1) - the catalytic core - and CF(0) - the membrane proton channel. CF(1) has five subunits: alpha(3), beta(3), gamma(1), delta(1), epsilon(1). CF(0) has three main subunits: a(1), b(2) and c(9-12). The alpha and beta chains form an alternating ring which encloses part of the gamma chain. CF(1) is attached to CF(0) by a central stalk formed by the gamma and epsilon chains, while a peripheral stalk is formed by the delta and b chains.

The protein resides in the cell inner membrane. It catalyses the reaction ATP + H2O + 4 H(+)(in) = ADP + phosphate + 5 H(+)(out). Its function is as follows. Produces ATP from ADP in the presence of a proton gradient across the membrane. The catalytic sites are hosted primarily by the beta subunits. The protein is ATP synthase subunit beta of Campylobacter curvus (strain 525.92).